The following is a 192-amino-acid chain: Casparian strip membrane protein 4 (192 aa).

At 1-29 the chain is on the cytoplasmic side; sequence MTKDVVIEHGESSKAPLVPAPVAAGVGRA. A helical transmembrane segment spans residues 30–50; sequence VSIADVFLRFLSIVATIASAI. Residues 51–79 are Extracellular-facing; the sequence is SMGTTNETLPFFTQFIQFEAKYSDLPSFT. N-linked (GlcNAc...) asparagine glycosylation occurs at Asn-56. A helical membrane pass occupies residues 80–100; it reads FFVAANAVVCTYLVLSIPLSI. At 101–112 the chain is on the cytoplasmic side; sequence VHIIRPRARYSR. The helical transmembrane segment at 113-133 threads the bilayer; that stretch reads LILVFFDAVMLALLTAGASAA. The Extracellular segment spans residues 134 to 166; that stretch reads AAIVYLAHKGNVRANWFAICQQFDSFCERISGS. The helical transmembrane segment at 167–187 threads the bilayer; that stretch reads LIGSFAAMVLLIVLIFLSAFA. Residues 188 to 192 lie on the Cytoplasmic side of the membrane; sequence LARRH.

The protein belongs to the Casparian strip membrane proteins (CASP) family. As to quaternary structure, homodimer and heterodimers.

The protein localises to the cell membrane. Regulates membrane-cell wall junctions and localized cell wall deposition. Required for establishment of the Casparian strip membrane domain (CSD) and the subsequent formation of Casparian strips, a cell wall modification of the root endodermis that determines an apoplastic barrier between the intraorganismal apoplasm and the extraorganismal apoplasm and prevents lateral diffusion. The protein is Casparian strip membrane protein 4 of Sorghum bicolor (Sorghum).